The chain runs to 385 residues: NADH-quinone oxidoreductase subunit H (385 aa).

8 consecutive transmembrane segments (helical) span residues 14-34 (GLKL…LVWL), 80-100 (FLYY…FSAI), 130-150 (IGVG…TLLM), 172-192 (ISYE…YGTF), 219-239 (LPNW…SAAF), 280-300 (MMIA…IPYV), 325-345 (LIHF…FIWV), and 365-385 (MLPW…IASL).

It belongs to the complex I subunit 1 family. NDH-1 is composed of 14 different subunits. Subunits NuoA, H, J, K, L, M, N constitute the membrane sector of the complex.

It localises to the cell inner membrane. It carries out the reaction a quinone + NADH + 5 H(+)(in) = a quinol + NAD(+) + 4 H(+)(out). In terms of biological role, NDH-1 shuttles electrons from NADH, via FMN and iron-sulfur (Fe-S) centers, to quinones in the respiratory chain. The immediate electron acceptor for the enzyme in this species is believed to be ubiquinone. Couples the redox reaction to proton translocation (for every two electrons transferred, four hydrogen ions are translocated across the cytoplasmic membrane), and thus conserves the redox energy in a proton gradient. This subunit may bind ubiquinone. The polypeptide is NADH-quinone oxidoreductase subunit H (Bdellovibrio bacteriovorus (strain ATCC 15356 / DSM 50701 / NCIMB 9529 / HD100)).